The following is a 292-amino-acid chain: 4-diphosphocytidyl-2-C-methyl-D-erythritol kinase (292 aa).

The active site involves K20. ATP is bound at residue 103–113; the sequence is PMGGGIGGGSS. D145 is a catalytic residue.

This sequence belongs to the GHMP kinase family. IspE subfamily.

It carries out the reaction 4-CDP-2-C-methyl-D-erythritol + ATP = 4-CDP-2-C-methyl-D-erythritol 2-phosphate + ADP + H(+). The protein operates within isoprenoid biosynthesis; isopentenyl diphosphate biosynthesis via DXP pathway; isopentenyl diphosphate from 1-deoxy-D-xylulose 5-phosphate: step 3/6. Catalyzes the phosphorylation of the position 2 hydroxy group of 4-diphosphocytidyl-2C-methyl-D-erythritol. The polypeptide is 4-diphosphocytidyl-2-C-methyl-D-erythritol kinase (Cupriavidus metallidurans (strain ATCC 43123 / DSM 2839 / NBRC 102507 / CH34) (Ralstonia metallidurans)).